Reading from the N-terminus, the 209-residue chain is MLGRPKFVLASGSPRRLSLLNQAGIEPDALRPADVDETPKRGELPRACANRLARAKADAALKSVQLDDELRGAFILSADTVVAVGRRILPKANLVDEAAQCLRLLSGRNHRVYTAICLVTPREAFRQRLVETRVRFKRLSEDDIQAYIGSGEWRGKAGGYAVQGIAGSFVVKMVGSYSNVVGLPLYETTTLLGGEGFPIRFGWLNATAV.

Asp-79 (proton acceptor) is an active-site residue.

Belongs to the Maf family. YhdE subfamily. A divalent metal cation serves as cofactor.

It is found in the cytoplasm. It catalyses the reaction dTTP + H2O = dTMP + diphosphate + H(+). The enzyme catalyses UTP + H2O = UMP + diphosphate + H(+). Nucleoside triphosphate pyrophosphatase that hydrolyzes dTTP and UTP. May have a dual role in cell division arrest and in preventing the incorporation of modified nucleotides into cellular nucleic acids. This chain is dTTP/UTP pyrophosphatase, found in Bradyrhizobium diazoefficiens (strain JCM 10833 / BCRC 13528 / IAM 13628 / NBRC 14792 / USDA 110).